A 361-amino-acid chain; its full sequence is Peptide chain release factor 1 (361 aa).

Gln238 carries the post-translational modification N5-methylglutamine.

It belongs to the prokaryotic/mitochondrial release factor family. Methylated by PrmC. Methylation increases the termination efficiency of RF1.

The protein localises to the cytoplasm. Functionally, peptide chain release factor 1 directs the termination of translation in response to the peptide chain termination codons UAG and UAA. The protein is Peptide chain release factor 1 of Mesomycoplasma hyopneumoniae (strain J / ATCC 25934 / NCTC 10110) (Mycoplasma hyopneumoniae).